The primary structure comprises 133 residues: Small ribosomal subunit protein uS8 (133 aa).

Belongs to the universal ribosomal protein uS8 family. In terms of assembly, part of the 30S ribosomal subunit. Contacts proteins S5 and S12.

Functionally, one of the primary rRNA binding proteins, it binds directly to 16S rRNA central domain where it helps coordinate assembly of the platform of the 30S subunit. The protein is Small ribosomal subunit protein uS8 of Chlorobaculum parvum (strain DSM 263 / NCIMB 8327) (Chlorobium vibrioforme subsp. thiosulfatophilum).